A 466-amino-acid polypeptide reads, in one-letter code: MTQTLYDKLMNAHVIRRDNSTELIYIDRQLIHEVTSPQAFEGLAIAGRKPWSTSANLAVPDHNVPTTNRSSGINGISDPISKLQIETLDKNCKTFGINEIPMNDIRQGIVHVVGPEQGFTLPGMSIVCGDSHTSTHGALGALAFGIGTSEVEHVLATGCLWQSKSKNFNIEVSGKLNKHVSAKDIALYIIGKIGTAGGTGHAIEFSGDTIQSLSIEGRMTLCNMAIEAGARVGMVAVDDKTIDYVKGRILAPSGAKWSKAVEYWHTLHSDKNAHFEKIAHFNAKDIKPQVTWGTSPEMVITIDGYIPNPANAKNHTEKVSWENALNYMQLTADIKISDIKIDKVFIGSCTNSRIEDLRIVASVLKDKKIANNIKLALVVPGSGLIKKQAEKEGLDKIFINSGFEWREAGCSMCLAMNADKLKVGERCISTSNRNFEGRQGQGSFTHLVSPAIAAASAITGHFSEVK.

Cys-349, Cys-410, and Cys-413 together coordinate [4Fe-4S] cluster.

Belongs to the aconitase/IPM isomerase family. LeuC type 1 subfamily. As to quaternary structure, heterodimer of LeuC and LeuD. It depends on [4Fe-4S] cluster as a cofactor.

It carries out the reaction (2R,3S)-3-isopropylmalate = (2S)-2-isopropylmalate. It functions in the pathway amino-acid biosynthesis; L-leucine biosynthesis; L-leucine from 3-methyl-2-oxobutanoate: step 2/4. Its function is as follows. Catalyzes the isomerization between 2-isopropylmalate and 3-isopropylmalate, via the formation of 2-isopropylmaleate. The polypeptide is 3-isopropylmalate dehydratase large subunit (Ruthia magnifica subsp. Calyptogena magnifica).